The chain runs to 223 residues: Small ribosomal subunit protein uS3 (223 aa).

Residues 39–108 (IRKFVKKKGA…VILINIVEVK (70 aa)) enclose the KH type-2 domain.

Belongs to the universal ribosomal protein uS3 family. As to quaternary structure, part of the 30S ribosomal subunit. Forms a tight complex with proteins S10 and S14.

Its function is as follows. Binds the lower part of the 30S subunit head. Binds mRNA in the 70S ribosome, positioning it for translation. This chain is Small ribosomal subunit protein uS3, found in Clostridium kluyveri (strain NBRC 12016).